A 403-amino-acid polypeptide reads, in one-letter code: Lissencephaly-1 homolog 1 (403 aa).

The LisH domain occupies 7-38 (QRDELNQAIHQYLLISYQQSAQLFKTEAAVKD). The stretch at 51-87 (NSIVRLSKRVITLEQQVEQLNEQLAQAQAGKIQFNKS) forms a coiled coil. WD repeat units follow at residues 103–142 (GHRA…FEKT), 145–184 (GHTS…CVKT), 187–226 (GHEH…CKKT), 229–270 (EHQE…HQLS), 271–327 (GHEH…NLFT), 330–369 (GHDN…QKKK), and 373–403 (AHDK…WLLS).

It belongs to the WD repeat LIS1/nudF family.

Its subcellular location is the cytoplasm. The protein localises to the cytoskeleton. It is found in the microtubule organizing center. The protein resides in the centrosome. Positively regulates the activity of the minus-end directed microtubule motor protein dynein. May enhance dynein-mediated microtubule sliding by targeting dynein to the microtubule plus end. Required for several dynein- and microtubule-dependent processes. In Paramecium tetraurelia, this protein is Lissencephaly-1 homolog 1.